Reading from the N-terminus, the 273-residue chain is Non-homologous end joining protein Ku (273 aa).

Positions 13 to 190 constitute a Ku domain; it reads KLSLVTCPVA…FTGIEKKSDA (178 aa). Residues 227–251 are disordered; it reads KKKAKKPSKAKASKSTKGDDEEKSN. A compositionally biased stretch (basic residues) spans 228 to 240; it reads KKAKKPSKAKASK.

It belongs to the prokaryotic Ku family. Homodimer. Interacts with LigD.

In terms of biological role, with LigD forms a non-homologous end joining (NHEJ) DNA repair enzyme, which repairs dsDNA breaks with reduced fidelity. Binds linear dsDNA with 5'- and 3'- overhangs but not closed circular dsDNA nor ssDNA. Recruits and stimulates the ligase activity of LigD. This chain is Non-homologous end joining protein Ku, found in Allorhizobium ampelinum (strain ATCC BAA-846 / DSM 112012 / S4) (Agrobacterium vitis (strain S4)).